The chain runs to 962 residues: CRACD-like protein (962 aa).

3 disordered regions span residues 38–102 (GKKK…PESG), 131–174 (NVKM…HDVG), and 212–871 (PAES…QEPV). Positions 46–61 (PSSTGSSTWKQSQTRN) are enriched in polar residues. Serine 92 bears the Phosphoserine mark. Residues 224–244 (AKHKLQVKPRNQRSSKMRRLS) are compositionally biased toward basic residues. Over residues 245–256 (SRAQSESLSDLT) the composition is skewed to polar residues. Positions 266–278 (EKPLLEVSPEERP) are enriched in basic and acidic residues. Composition is skewed to pro residues over residues 292-303 (EPGPPAPLPPPG) and 354-365 (PPSPPEGPPNPG). The segment covering 407-425 (PEGDTTPPETDPAATSEAP) has biased composition (low complexity). Basic and acidic residues-rich tracts occupy residues 429 to 440 (DGPERSVPKEAE) and 459 to 480 (EPER…ERIG). Serine 490 carries the phosphoserine modification. A compositionally biased stretch (low complexity) spans 503–521 (AAASEGPAASPPLAAAESP). Composition is skewed to basic and acidic residues over residues 536 to 546 (APERPKAERAE), 555 to 570 (AAPE…ELRG), 631 to 642 (KLAERGPQDSGD), and 709 to 728 (YSAE…EEKC). The span at 753-764 (PEPLSSKPPLPR) shows a compositional bias: pro residues. 2 stretches are compositionally biased toward basic and acidic residues: residues 784 to 806 (PGER…RGAE) and 844 to 869 (QEDK…RGQE).

This chain is CRACD-like protein, found in Homo sapiens (Human).